A 105-amino-acid polypeptide reads, in one-letter code: U-scoloptoxin(10)-Sm3a (105 aa).

Residues 1 to 23 (MYKFIFIFFTVFFLINIIEESXT) form the signal peptide.

The protein belongs to the scoloptoxin-10 family. Post-translationally, contains 3 disulfide bonds. As to expression, expressed by the venom gland.

The protein localises to the secreted. The polypeptide is U-scoloptoxin(10)-Sm3a (Scolopendra morsitans (Tanzanian blue ringleg centipede)).